Reading from the N-terminus, the 623-residue chain is MDPEQTFIRVQERFSQILTPRIRGFLEYTYLFVAITLFCILVVMHANYVQQPGCSSELTGVELAEAELMQIKITSAGLWSRNDESTAADVPRVVAATDSLEVSKTDQESSTSEENTDDTFVKIDKEEPRSSFSVSAKENVRAAILRFLKKCYRRISFVLQHTARILRGVRKIWNIIGIPLNLDVPKLLHVLYMDKVNYYAVQWLESKTQEFEPTYLYTMEKGYFLLPDEAKSRHNIRTANVSISARHPCFGNRWQQLLINRVVGYDTIIMNSLQNSAGQGYLYNYQTREFYNLSYSQELPDGSAHFGDYLVTKCGVLMMSLFVFFTTTMSVSFTLRETQTRMLKFTVQLQHHAQHRLPTFQLIFVHVIESLVFVPIMIGILFFLFEFYDDQLLAFMVLVLVWLCELFTLISVRTPISMKFFPRFFLLYFLVFHIYFFSYAYGFSYLALMTTAAFMQHLILYFWNRFEVPALQRFLQSRQSHLQQHPDFHITSSTILASTLHITRLNRTTRNRTPSGPNHTTPNQNTETRSFTADGGGVGNPAQYQEQQEENEANTVPAEPNPQQAGAMSSFSSMLLWILGGASSEGLNSFLSMFRDVRDEDEAQVFADTSPPQNPHHDPLSVD.

The helical transmembrane segment at 24–44 (GFLEYTYLFVAITLFCILVVM) threads the bilayer. Positions 99-119 (SLEVSKTDQESSTSEENTDDT) are disordered. A run of 4 helical transmembrane segments spans residues 315-335 (GVLM…SFTL), 363-383 (IFVH…ILFF), 392-412 (LLAF…LISV), and 424-444 (FFLL…YGFS). Disordered stretches follow at residues 506–567 (NRTT…QAGA) and 602–623 (EAQV…LSVD). Residues 514 to 531 (PSGPNHTTPNQNTETRSF) are compositionally biased toward polar residues.

The protein belongs to the membralin family.

The protein localises to the membrane. In Arabidopsis thaliana (Mouse-ear cress), this protein is Membralin-like protein At1g60995.